An 89-amino-acid polypeptide reads, in one-letter code: Small ribosomal subunit protein uS19 (89 aa).

The protein belongs to the universal ribosomal protein uS19 family.

Protein S19 forms a complex with S13 that binds strongly to the 16S ribosomal RNA. This Xylella fastidiosa (strain M23) protein is Small ribosomal subunit protein uS19.